Reading from the N-terminus, the 690-residue chain is MLPRGRPRAMGAAVLLLLLLLVVGFFLFGRDPDYGLGTTATLDEDPYRSRNLSASSPQLLLPPKCEMLHVAIVCAGYNSSREIITLTKSLLFYRKNPLHLHLITDAVARNILETLFRTWMVPAVVVSFYDAEELKPLVSWIPNKHYSGLYGLMKLVLPSILPPSLARVIVLDTDVTFSSDIVELWALFDHFSDKQVVGLVENQSDWYLGNLWKNHRPWPALGRGFNTGVILLWLDRLQQTGWEQMWKVTAKRELLTLMATSLADQDIFNAVIKEHPHLVHPLPCVWNVQLSDHTRAERCYLEAADLKVIHWNSPKKLRVKNKHAEFFRNLHLTFLGYDGKLLRRELFGCPNQFPPGAEQLQQALTQLDEEEPCFEFRQQQLTVHRVHITFLPHQPPPPQPHDVTLVAQLSMDRLQMLEALCRHWPGPMSLALYLTDEEAQQFLHFVETSPVLSMRKDVAYHVVYRDGPLYPVNQLRNVALAQALTPYVFLSDIDFLPAYSLYDYLRASIEQLELDSRRKTALVVPAFETLHYRFSFPNSKAELLTLLDAGSLHTFRYHEWPQGHSSTDYSRWREAQAPYSVQWSADYEPYVVVPRDCPRYDPRFVGFGWNKVAHIIELDAQEYEFLVLPEAFSIHLPHAPSLDISRFRSSPTYRNCLQALKEEFHQDLSRRYGSAALKYLTALQQARSRA.

Residues 1 to 8 lie on the Cytoplasmic side of the membrane; it reads MLPRGRPR. A helical; Signal-anchor for type II membrane protein transmembrane segment spans residues 9 to 29; the sequence is AMGAAVLLLLLLLVVGFFLFG. At 30–690 the chain is on the lumenal side; that stretch reads RDPDYGLGTT…TALQQARSRA (661 aa). N-linked (GlcNAc...) asparagine glycans are attached at residues Asn51 and Asn78. A xylosyltransferase activity region spans residues 68–343; it reads LHVAIVCAGY…FLGYDGKLLR (276 aa). Residues Asp172 and Asp174 each contribute to the Mn(2+) site. The N-linked (GlcNAc...) asparagine glycan is linked to Asn202. Positions 344–686 are glucuronyltransferase activity; sequence RELFGCPNQF…LKYLTALQQA (343 aa). Mn(2+) is bound by residues Asp492 and Asp494.

This sequence in the C-terminal section; belongs to the glycosyltransferase 49 family. It in the N-terminal section; belongs to the glycosyltransferase 8 family. The protein belongs to the glycosyltransferase 8 family. As to quaternary structure, interacts with B4GAT1. Mn(2+) serves as cofactor. In terms of tissue distribution, highly expressed in the testis and kidney, but weakly expressed in the heart and brain. Expressed during embryogenesis from 7 dpc.

It localises to the golgi apparatus membrane. The catalysed reaction is 3-O-[beta-D-GlcA-(1-&gt;3)-beta-D-Xyl-(1-&gt;4)-Rib-ol-P-Rib-ol-P-3-beta-D-GalNAc-(1-&gt;3)-beta-D-GlcNAc-(1-&gt;4)-(O-6-P-alpha-D-Man)]-Thr-[protein] + UDP-alpha-D-xylose = 3-O-[alpha-D-Xyl-(1-&gt;3)-beta-D-GlcA-(1-&gt;4)-beta-D-Xyl-(1-&gt;4)-Rib-ol-P-Rib-ol-P-3-beta-D-GalNAc-(1-&gt;3)-beta-D-GlcNAc-(1-&gt;4)-(O-6-P-alpha-D-Man)]-Thr-[protein] + UDP + H(+). It catalyses the reaction 3-O-{(1-&gt;[3)-alpha-D-Xyl-(1-&gt;3)-beta-D-GlcA-(1-&gt;](n)-4)-beta-D-Xyl-(1-&gt;4)-Rib-ol-P-Rib-ol-P-3-beta-D-GalNAc-(1-&gt;3)-beta-D-GlcNAc-(1-&gt;4)-O-6-P-alpha-D-Man}-L-Thr-[protein] + UDP-alpha-D-glucuronate = 3-O-{beta-D-GlcA-(1-&gt;[3)-alpha-D-Xyl-(1-&gt;3)-beta-D-GlcA-(1-&gt;](n)-4)-beta-D-Xyl-(1-&gt;4)-Rib-ol-P-Rib-ol-P-3-beta-D-GalNAc-(1-&gt;3)-beta-D-GlcNAc-(1-&gt;4)-O-6-P-alpha-D-Man}-L-Thr-[protein] + UDP + H(+). The enzyme catalyses 3-O-{beta-D-GlcA-(1-&gt;[3)-alpha-D-Xyl-(1-&gt;3)-beta-D-GlcA-(1-&gt;](n)-4)-beta-D-Xyl-(1-&gt;4)-Rib-ol-P-Rib-ol-P-3-beta-D-GalNAc-(1-&gt;3)-beta-D-GlcNAc-(1-&gt;4)-O-6-P-alpha-D-Man}-L-Thr-[protein] + UDP-alpha-D-xylose = 3-O-{(1-&gt;[3)-alpha-D-Xyl-(1-&gt;3)-beta-D-GlcA-(1-&gt;](n+1)-4)-beta-D-Xyl-(1-&gt;4)-Rib-ol-P-Rib-ol-P-3-beta-D-GalNAc-(1-&gt;3)-beta-D-GlcNAc-(1-&gt;4)-O-6-P-alpha-D-Man}-L-Thr-[protein] + UDP + H(+). It functions in the pathway protein modification; protein glycosylation. In terms of biological role, bifunctional glycosyltransferase with both alpha-1,3-xylosyltransferase and beta-1,3-glucuronyltransferase activities involved in the maturation of alpha-dystroglycan (DAG1) by glycosylation leading to DAG1 binding to laminin G-like domain-containing extracellular proteins with high affinity and in a phosphorylated-O-mannosyl trisaccharide dependent manner. Elongates the glucuronyl-beta-1,4-xylose-beta disaccharide primer structure by adding repeating units [-3-Xylose-alpha-1,3-GlcA-beta-1-] to produce a heteropolysaccharide. Supports the maturation of DAG1 more effectively than LARGE1. In addition, can modify both heparan sulfate (HS)- and chondroitin/dermatan sulfate (CS/DS)-proteoglycans (PGs), namely GPC4, with a glycosaminoglycan (GAG)-like polysaccharide composed of xylose and glucuronic acid to confer laminin binding. The protein is Xylosyl- and glucuronyltransferase LARGE2 of Mus musculus (Mouse).